A 469-amino-acid chain; its full sequence is Glutamate--tRNA ligase (469 aa).

The short motif at 9 to 19 is the 'HIGH' region element; sequence PSPTGFLHVGG. Zn(2+)-binding residues include C98, C100, C125, and D127. A 'KMSKS' region motif is present at residues 236-240; it reads KLSKR. K239 provides a ligand contact to ATP.

This sequence belongs to the class-I aminoacyl-tRNA synthetase family. Glutamate--tRNA ligase type 1 subfamily. In terms of assembly, monomer. Zn(2+) serves as cofactor.

It localises to the cytoplasm. It carries out the reaction tRNA(Glu) + L-glutamate + ATP = L-glutamyl-tRNA(Glu) + AMP + diphosphate. Functionally, catalyzes the attachment of glutamate to tRNA(Glu) in a two-step reaction: glutamate is first activated by ATP to form Glu-AMP and then transferred to the acceptor end of tRNA(Glu). This Shewanella sp. (strain W3-18-1) protein is Glutamate--tRNA ligase.